The primary structure comprises 455 residues: Ribosomal protein uS12 methylthiotransferase RimO (455 aa).

Positions 10-126 (RKVSMISLGC…ILELIEAHDR (117 aa)) constitute an MTTase N-terminal domain. 6 residues coordinate [4Fe-4S] cluster: Cys19, Cys55, Cys89, Cys164, Cys168, and Cys171. A Radical SAM core domain is found at 150–380 (SSPFYSTYVK…MKAQQRVSFR (231 aa)). The 69-residue stretch at 383–451 (RALIGRVEPV…EYDLIGEIVD (69 aa)) folds into the TRAM domain.

It belongs to the methylthiotransferase family. RimO subfamily. [4Fe-4S] cluster is required as a cofactor.

The protein localises to the cytoplasm. It catalyses the reaction L-aspartate(89)-[ribosomal protein uS12]-hydrogen + (sulfur carrier)-SH + AH2 + 2 S-adenosyl-L-methionine = 3-methylsulfanyl-L-aspartate(89)-[ribosomal protein uS12]-hydrogen + (sulfur carrier)-H + 5'-deoxyadenosine + L-methionine + A + S-adenosyl-L-homocysteine + 2 H(+). In terms of biological role, catalyzes the methylthiolation of an aspartic acid residue of ribosomal protein uS12. The sequence is that of Ribosomal protein uS12 methylthiotransferase RimO from Syntrophotalea carbinolica (strain DSM 2380 / NBRC 103641 / GraBd1) (Pelobacter carbinolicus).